Consider the following 211-residue polypeptide: Probable cobalt-precorrin-7 C(5)-methyltransferase (211 aa).

This sequence belongs to the precorrin methyltransferase family.

The catalysed reaction is Co-precorrin-7 + S-adenosyl-L-methionine = Co-precorrin-8X + S-adenosyl-L-homocysteine + H(+). It functions in the pathway cofactor biosynthesis; adenosylcobalamin biosynthesis; cob(II)yrinate a,c-diamide from sirohydrochlorin (anaerobic route): step 8/10. Catalyzes the methylation of C-5 in cobalt-precorrin-7 to form cobalt-precorrin-8. In Methanocaldococcus jannaschii (strain ATCC 43067 / DSM 2661 / JAL-1 / JCM 10045 / NBRC 100440) (Methanococcus jannaschii), this protein is Probable cobalt-precorrin-7 C(5)-methyltransferase (cbiE).